The primary structure comprises 611 residues: Immunoglobulin superfamily member 8 (611 aa).

The signal sequence occupies residues 1–25 (MGVPSPTPLSSLLLLLLILGTRCYA). 4 consecutive Ig-like C2-type domains span residues 26–143 (RQVH…AKVE), 160–284 (PRGR…WVQV), 301–422 (SQLA…EAAS), and 429–554 (PVHV…ADYS). The Extracellular segment spans residues 26–577 (RQVHVPRGPL…VYPYTHAVDT (552 aa)). Residues cysteine 47 and cysteine 125 are joined by a disulfide bond. 2 N-linked (GlcNAc...) asparagine glycosylation sites follow: asparagine 48 and asparagine 137. Cysteine 184 and cysteine 268 are joined by a disulfide. An EWI motif motif is present at residues 272–274 (EWI). Disulfide bonds link cysteine 324-cysteine 404 and cysteine 460-cysteine 542. Asparagine 325 carries N-linked (GlcNAc...) asparagine glycosylation. At serine 516 the chain carries Phosphoserine. The helical transmembrane segment at 578-598 (LFVPLLVGTGVALVTGASVLA) threads the bilayer. Topologically, residues 599–611 (TITCCFMKRMRKR) are cytoplasmic. S-palmitoyl cysteine attachment occurs at residues cysteine 602 and cysteine 603.

As to quaternary structure, interacts directly with CD82 and CD9/tetraspanin-29. Also interacts with integrin alpha-3/beta-1 and integrin alpha-4/beta-1. Part of a complex composed of CD9, PTGFRN and CD81. Interacts with CD81/tetraspanin-28. In terms of tissue distribution, expressed in lymphocytes as well as in many tissues with higher expression in brain. Detected in all regions of the brain with weak expression in the pituitary. Expressed selectively by neurons but not by glial cells. Expressed in myoblasts (at protein level).

The protein localises to the cell membrane. Member of the immunoglobulin superfamily (IgSF) that links tetraspanin-enriched microdomains to the actin cytoskeleton and plays several important roles in innate and adaptive immunity. Acts as an inducible receptor of HSPA8 on dendritic cells to enhance the CCL21/SLC-dependent migration of activated mature dendritic cells while attenuating their antigen-specific stimulatory capacities. In complex with alpha-actinins ACTN1 and ACTN4, regulates actin dynamics in the immune synapse and subsequent T-cell activation. Inhibits the entry of several viruses such as hepatitis C Virus (HCV) or HIV-1. Mechanistically, promotes a change in CD81 organization at the plasma membrane by significantly restricting its diffusion which in turn influences CD81 interaction with Claudin-1/CLDN1, preventing CLDN1 from acting as a co-receptor required for HCV entry. Accumulates at the presynaptic terminal, the producer cell side of the virological synapse, to prevent HIV-1 Env-mediated cell-cell fusion. Highly expressed on malignant cells with antigen presentation defects, interacts with NK receptor KLRA9 to suppress NK-cell cytotoxicity. May participate in the regulation of neurite outgrowth and maintenance of the neural network in the adult brain. This chain is Immunoglobulin superfamily member 8 (Igsf8), found in Mus musculus (Mouse).